Here is a 76-residue protein sequence, read N- to C-terminus: Conotoxin VnMSGL-0112 (76 aa).

The N-terminal stretch at 1–20 is a signal peptide; sequence MSGLGIMVLTLLLLVSMATS. Residues 21 to 45 constitute a propeptide that is removed on maturation; the sequence is HQDGRGKQATQRDAINVRRRRSITR. Cystine bridges form between Cys-49–Cys-61, Cys-53–Cys-70, and Cys-60–Cys-74.

It belongs to the conotoxin O3 superfamily. Expressed by the venom duct.

Its subcellular location is the secreted. The polypeptide is Conotoxin VnMSGL-0112 (Conus ventricosus (Mediterranean cone)).